Reading from the N-terminus, the 325-residue chain is DNA repair and recombination protein RadA (325 aa).

107-114 (GEFGSGKT) lines the ATP pocket.

This sequence belongs to the eukaryotic RecA-like protein family.

Functionally, involved in DNA repair and in homologous recombination. Binds and assemble on single-stranded DNA to form a nucleoprotein filament. Hydrolyzes ATP in a ssDNA-dependent manner and promotes DNA strand exchange between homologous DNA molecules. The chain is DNA repair and recombination protein RadA from Methanosarcina barkeri (strain Fusaro / DSM 804).